A 210-amino-acid chain; its full sequence is Large ribosomal subunit protein uL4 (210 aa).

The segment at 41 to 79 (MANARQGTASTKTRAEVRGGGRKPWRQKGTGRARAGSNR) is disordered. The segment covering 43-52 (NARQGTASTK) has biased composition (polar residues). Positions 60-71 (GGRKPWRQKGTG) are enriched in basic residues.

It belongs to the universal ribosomal protein uL4 family. In terms of assembly, part of the 50S ribosomal subunit.

Functionally, one of the primary rRNA binding proteins, this protein initially binds near the 5'-end of the 23S rRNA. It is important during the early stages of 50S assembly. It makes multiple contacts with different domains of the 23S rRNA in the assembled 50S subunit and ribosome. Its function is as follows. Forms part of the polypeptide exit tunnel. This is Large ribosomal subunit protein uL4 from Cyanothece sp. (strain PCC 7425 / ATCC 29141).